The following is a 394-amino-acid chain: Shematrin-like protein 2 (394 aa).

The first 19 residues, 1–19 (MKPFISLASLIVLIASASA), serve as a signal peptide directing secretion.

As to expression, prismatic layer of shell (at protein level). Expressed primarily in the mantle with highest level in the mantle edge and lower level in the mantle pallium.

It is found in the secreted. The polypeptide is Shematrin-like protein 2 (Pinctada maxima (Silver-lipped pearl oyster)).